The following is a 255-amino-acid chain: Protein 2b (255 aa).

Belongs to the tobravirus protein 2b family.

It is found in the virion. Functionally, may function by interacting with a small, flexible domain located at the C-terminus of the CP, forming a bridge between the virus particle and the internal surface of the vector nematode feeding apparatus. The polypeptide is Protein 2b (Tobacco rattle virus (strain TCM)).